A 207-amino-acid polypeptide reads, in one-letter code: Protein Nef (207 aa).

Residue Gly-2 is the site of N-myristoyl glycine; by host attachment. Ser-6 carries the phosphoserine; by host modification. Residues 62-66 form an acidic; interacts with host PACS1 and PACS2; stabilizes the interaction of NEF/MHC-I with host AP1M1; necessary for MHC-I internalization region; that stretch reads EESEE. Residues 70 to 79 are SH3-binding; interaction with Src family tyrosine kinases; sequence PVRPQVPLRP. The PxxP; stabilizes the interaction of NEF/MHC-I with host AP1M1; necessary for MHC-I internalization motif lies at 73 to 76; that stretch reads PQVP. The tract at residues 109–125 is mediates dimerization, Nef-PTE1 interaction; it reads EILDLWVYNTQGIFPDW. A binding to ATP6V1H region spans residues 149–181; sequence VDPQEVEEATEREDNCLLHPMCQQGMEDPERQV. The short motif at 165 to 166 is the Dileucine internalization motif; necessary for CD4 internalization element; sequence LL. The short motif at 175–176 is the Diacidic; necessary for CD4 internalization element; sequence ED.

It belongs to the lentivirus primate group Nef protein family. In terms of assembly, monomer; cytosolic form. Homodimer; membrane bound form. Interacts with Nef associated p21-activated kinase (PAK2); this interaction activates PAK2. Associates with the Nef-MHC-I-AP1 complex; this complex is required for MHC-I internalization. Interacts (via C-terminus) with host PI3-kinase. Interacts with host PACS1; this interaction seems to be weak. Interacts with host PACS2. Interacts with host LCK and MAPK3; these interactions inhibit the kinase activity of the latter. Interacts with host ATP6V1H; this interaction may play a role in CD4 endocytosis. Associates with the CD4-Nef-AP2 complex; this complex is required for CD4 internalization. Interacts with host AP2 subunit alpha and AP2 subunit sigma2. Interacts with TCR-zeta chain; this interaction up-regulates the Fas ligand (FasL) surface expression. Interacts with host HCK, LYN, and SRC; these interactions activate the Src family kinases. Interacts with MAP3K5; this interaction inhibits the Fas and TNFR-mediated death signals. Interacts with beta-COP and PTE1. Interacts with human RACK1; this increases Nef phosphorylation by PKC. Interacts with TP53; this interaction decreases the half-life of TP53, protecting the infected cell against p53-mediated apoptosis. The virion-associated Nef proteins are cleaved by the viral protease to release the soluble C-terminal core protein. Nef is probably cleaved concomitantly with viral structural proteins on maturation of virus particles. In terms of processing, myristoylated. Post-translationally, phosphorylated on serine residues, probably by host PKCdelta and theta.

It localises to the host cell membrane. It is found in the virion. The protein localises to the secreted. The protein resides in the host Golgi apparatus membrane. In terms of biological role, factor of infectivity and pathogenicity, required for optimal virus replication. Alters numerous pathways of T-lymphocyte function and down-regulates immunity surface molecules in order to evade host defense and increase viral infectivity. Alters the functionality of other immunity cells, like dendritic cells, monocytes/macrophages and NK cells. In infected CD4(+) T-lymphocytes, down-regulates the surface MHC-I, mature MHC-II, CD4, CD28, CCR5 and CXCR4 molecules. Mediates internalization and degradation of host CD4 through the interaction of with the cytoplasmic tail of CD4, the recruitment of AP-2 (clathrin adapter protein complex 2), internalization through clathrin coated pits, and subsequent transport to endosomes and lysosomes for degradation. Diverts host MHC-I molecules to the trans-Golgi network-associated endosomal compartments by an endocytic pathway to finally target them for degradation. MHC-I down-regulation may involve AP-1 (clathrin adapter protein complex 1) or possibly Src family kinase-ZAP70/Syk-PI3K cascade recruited by PACS2. In consequence infected cells are masked for immune recognition by cytotoxic T-lymphocytes. Decreasing the number of immune receptors also prevents reinfection by more HIV particles (superinfection). Down-regulates host SERINC3 and SERINC5 thereby excluding these proteins from the viral particles. Virion infectivity is drastically higher when SERINC3 or SERINC5 are excluded from the viral envelope, because these host antiviral proteins impair the membrane fusion event necessary for subsequent virion penetration. Functionally, bypasses host T-cell signaling by inducing a transcriptional program nearly identical to that of anti-CD3 cell activation. Interaction with TCR-zeta chain up-regulates the Fas ligand (FasL). Increasing surface FasL molecules and decreasing surface MHC-I molecules on infected CD4(+) cells send attacking cytotoxic CD8+ T-lymphocytes into apoptosis. Its function is as follows. Plays a role in optimizing the host cell environment for viral replication without causing cell death by apoptosis. Protects the infected cells from apoptosis in order to keep them alive until the next virus generation is ready to strike. Inhibits the Fas and TNFR-mediated death signals by blocking MAP3K5/ASK1. Decreases the half-life of TP53, protecting the infected cell against p53-mediated apoptosis. Inhibits the apoptotic signals regulated by the Bcl-2 family proteins through the formation of a Nef/PI3-kinase/PAK2 complex that leads to activation of PAK2 and induces phosphorylation of host BAD. In terms of biological role, extracellular Nef protein targets CD4(+) T-lymphocytes for apoptosis by interacting with CXCR4 surface receptors. The polypeptide is Protein Nef (Human immunodeficiency virus type 1 group M subtype D (isolate NDK) (HIV-1)).